Here is a 511-residue protein sequence, read N- to C-terminus: Histidine ammonia-lyase (511 aa).

Positions 142 to 144 (ASG) form a cross-link, 5-imidazolinone (Ala-Gly). At Ser143 the chain carries 2,3-didehydroalanine (Ser).

The protein belongs to the PAL/histidase family. In terms of processing, contains an active site 4-methylidene-imidazol-5-one (MIO), which is formed autocatalytically by cyclization and dehydration of residues Ala-Ser-Gly.

It is found in the cytoplasm. It catalyses the reaction L-histidine = trans-urocanate + NH4(+). Its pathway is amino-acid degradation; L-histidine degradation into L-glutamate; N-formimidoyl-L-glutamate from L-histidine: step 1/3. The polypeptide is Histidine ammonia-lyase (Brucella suis biovar 1 (strain 1330)).